The primary structure comprises 322 residues: N-acetyl-gamma-glutamyl-phosphate reductase (322 aa).

Cys-117 is an active-site residue.

It belongs to the NAGSA dehydrogenase family. Type 2 subfamily.

The protein localises to the cytoplasm. The enzyme catalyses N-acetyl-L-glutamate 5-semialdehyde + phosphate + NADP(+) = N-acetyl-L-glutamyl 5-phosphate + NADPH + H(+). It participates in amino-acid biosynthesis; L-arginine biosynthesis; N(2)-acetyl-L-ornithine from L-glutamate: step 3/4. In terms of biological role, catalyzes the NADPH-dependent reduction of N-acetyl-5-glutamyl phosphate to yield N-acetyl-L-glutamate 5-semialdehyde. This chain is N-acetyl-gamma-glutamyl-phosphate reductase, found in Trichormus variabilis (strain ATCC 29413 / PCC 7937) (Anabaena variabilis).